Consider the following 468-residue polypeptide: TFIIA-alpha and beta-like factor (468 aa).

Disordered regions lie at residues 215 to 236 (DRRLLPGNELRPQESSPYLSLP) and 379 to 416 (DSVSNEDSTANSSDNEDHQINAPEEDPLNSGDDVSEQD). Over residues 380-391 (SVSNEDSTANSS) the composition is skewed to polar residues. Over residues 401 to 416 (PEEDPLNSGDDVSEQD) the composition is skewed to acidic residues.

This sequence belongs to the TFIIA subunit 1 family. As to expression, testis specific. Expressed in pachytene spermatocytes and haploid spermatids.

It is found in the nucleus. In terms of biological role, may function as a testis specific transcription factor. Binds DNA in conjunction with GTF2A2 and TBP (the TATA-binding protein) and together with GTF2A2, allows mRNA transcription. The polypeptide is TFIIA-alpha and beta-like factor (Gtf2a1l) (Mus musculus (Mouse)).